The following is a 143-amino-acid chain: Large ribosomal subunit protein uL15 (143 aa).

The interval 1 to 59 (MELNGIKPSLGAKHAKRRVGRGIGSGLGKTAGRGHKGQKSRAGGYHKVGFEGGQMPMQR) is disordered. Residues 21–31 (RGIGSGLGKTA) show a composition bias toward gly residues.

It belongs to the universal ribosomal protein uL15 family. Part of the 50S ribosomal subunit.

Binds to the 23S rRNA. The sequence is that of Large ribosomal subunit protein uL15 from Polaromonas sp. (strain JS666 / ATCC BAA-500).